The sequence spans 562 residues: Solute carrier family 40 member 1 (562 aa).

At 1 to 20 the chain is on the cytoplasmic side; the sequence is MDSPASKKPRCERFREFFKS. Residues 21–50 form a helical membrane-spanning segment; the sequence is AKFLIYVGHALSTWGDRMWNFAVAVFLVEL. D36 contacts Fe cation. The Extracellular segment spans residues 51–54; the sequence is YGNS. Residues 55-81 traverse the membrane as a helical segment; it reads LLLTAVYGLVVAGSVLLLGAIIGDWVD. The Cytoplasmic segment spans residues 82–84; it reads KNP. The helical transmembrane segment at 85 to 115 threads the bilayer; sequence RLKVAQTSLVVQNSAVILCGALLMAVFQFKQ. The Extracellular portion of the chain corresponds to 116-123; it reads QLSSMYDG. Residues 124 to 159 form a helical membrane-spanning segment; it reads WLLTTCYIMVISIANIANLASTAMSITIQRDWVVVV. At 160–161 the chain is on the cytoplasmic side; sequence AG. A helical membrane pass occupies residues 162 to 192; sequence DDRSKLADMNATVRIIDQLTNILAPMLVGQI. The Extracellular segment spans residues 193–199; it reads MAFGSHF. Residues 200 to 226 form a helical membrane-spanning segment; it reads IGCGFISGWNLFSMCLEYFLLWKVYQK. The Cytoplasmic portion of the chain corresponds to 227-300; that stretch reads TPALAFKAGQ…DGWVAYYNQS (74 aa). Residues 301-327 form a helical membrane-spanning segment; that stretch reads IFFAGMSLAFLYMTVLGFDCITTGYAY. C320 contributes to the Fe cation binding site. Residues 328 to 332 are Extracellular-facing; sequence TQGLN. Residues 333 to 360 form a helical membrane-spanning segment; sequence GSVLSLLMGASAVSGICGTVAFTWIRKK. Topologically, residues 361–362 are cytoplasmic; it reads CG. Residues 363 to 385 traverse the membrane as a helical segment; the sequence is LIRTGFIAGVTQLSCLTLCVASV. Topologically, residues 386 to 444 are extracellular; the sequence is FAPGSPFDLSVSPFEEVLRHLFGDSGSLRESPTFIPTTEPPIQANVTVFEEAPPVESYM. Residues 445-474 traverse the membrane as a helical segment; it reads SVGLLFAGVIAARVGLWSFDLTVTQLIQEN. Residues 475-479 lie on the Cytoplasmic side of the membrane; the sequence is VIESE. Residues 480 to 504 traverse the membrane as a helical segment; the sequence is RGVINGVQNSMNYLLDLLHFIMVIL. Position 498 (H498) interacts with Fe cation. At 505–507 the chain is on the extracellular side; it reads APN. Residues 508–533 traverse the membrane as a helical segment; it reads PEAFGLLVIISVSFVAMGHMMYFRFA. The Cytoplasmic portion of the chain corresponds to 534–562; it reads YKSLGSRLFLFCSPEQKPDPNIPSLPNSV.

The protein belongs to the ferroportin (FP) (TC 2.A.100) family. SLC40A subfamily. As to expression, expressed in the yolk sac and placenta.

The protein resides in the cell membrane. The protein localises to the basolateral cell membrane. It carries out the reaction Fe(2+)(in) = Fe(2+)(out). Its function is as follows. Transports Fe(2+) from the inside of a cell to the outside of the cell, playing a key role for maintaining systemic iron homeostasis. May be involved in transfer of Fe(2+) between maternal and fetal circulation. In Danio rerio (Zebrafish), this protein is Solute carrier family 40 member 1 (slc40a1).